The sequence spans 428 residues: Enolase 1 (428 aa).

Q167 contributes to the (2R)-2-phosphoglycerate binding site. E209 serves as the catalytic Proton donor. Positions 246, 288, and 315 each coordinate Mg(2+). (2R)-2-phosphoglycerate-binding residues include K340, R369, S370, and K391. K340 (proton acceptor) is an active-site residue.

The protein belongs to the enolase family. In terms of assembly, component of the RNA degradosome, a multiprotein complex involved in RNA processing and mRNA degradation. It depends on Mg(2+) as a cofactor.

It is found in the cytoplasm. Its subcellular location is the secreted. It localises to the cell surface. The catalysed reaction is (2R)-2-phosphoglycerate = phosphoenolpyruvate + H2O. It participates in carbohydrate degradation; glycolysis; pyruvate from D-glyceraldehyde 3-phosphate: step 4/5. Functionally, catalyzes the reversible conversion of 2-phosphoglycerate (2-PG) into phosphoenolpyruvate (PEP). It is essential for the degradation of carbohydrates via glycolysis. This chain is Enolase 1, found in Pseudomonas syringae pv. tomato (strain ATCC BAA-871 / DC3000).